Here is a 402-residue protein sequence, read N- to C-terminus: DNA polymerase IV (402 aa).

One can recognise a UmuC domain in the interval 5–187; the sequence is ILLADMNSFY…LPVRELFGVG (183 aa). Mg(2+) contacts are provided by aspartate 9 and aspartate 105. Glutamate 106 is a catalytic residue.

This sequence belongs to the DNA polymerase type-Y family. In terms of assembly, monomer. Requires Mg(2+) as cofactor.

It is found in the cytoplasm. It carries out the reaction DNA(n) + a 2'-deoxyribonucleoside 5'-triphosphate = DNA(n+1) + diphosphate. In terms of biological role, poorly processive, error-prone DNA polymerase involved in untargeted mutagenesis. Copies undamaged DNA at stalled replication forks, which arise in vivo from mismatched or misaligned primer ends. These misaligned primers can be extended by PolIV. Exhibits no 3'-5' exonuclease (proofreading) activity. May be involved in translesional synthesis, in conjunction with the beta clamp from PolIII. The polypeptide is DNA polymerase IV (Pelotomaculum thermopropionicum (strain DSM 13744 / JCM 10971 / SI)).